We begin with the raw amino-acid sequence, 508 residues long: Maturase K (508 aa).

The protein belongs to the intron maturase 2 family. MatK subfamily.

It localises to the plastid. Its subcellular location is the chloroplast. In terms of biological role, usually encoded in the trnK tRNA gene intron. Probably assists in splicing its own and other chloroplast group II introns. The polypeptide is Maturase K (Pelargonium hortorum (Common geranium)).